Consider the following 483-residue polypeptide: ATP synthase subunit beta (483 aa).

169–176 (GGAGVGKT) provides a ligand contact to ATP.

Belongs to the ATPase alpha/beta chains family. As to quaternary structure, F-type ATPases have 2 components, CF(1) - the catalytic core - and CF(0) - the membrane proton channel. CF(1) has five subunits: alpha(3), beta(3), gamma(1), delta(1), epsilon(1). CF(0) has three main subunits: a(1), b(2) and c(9-12). The alpha and beta chains form an alternating ring which encloses part of the gamma chain. CF(1) is attached to CF(0) by a central stalk formed by the gamma and epsilon chains, while a peripheral stalk is formed by the delta and b chains.

It localises to the cell membrane. It catalyses the reaction ATP + H2O + 4 H(+)(in) = ADP + phosphate + 5 H(+)(out). Produces ATP from ADP in the presence of a proton gradient across the membrane. The catalytic sites are hosted primarily by the beta subunits. The polypeptide is ATP synthase subunit beta (Rhodococcus jostii (strain RHA1)).